The chain runs to 245 residues: Platelet-derived growth factor subunit B (245 aa).

The N-terminal stretch at 1–20 (MNRCWALFLSLCCYLRLVSA) is a signal peptide. The propeptide at 21–81 (EGDPIPEELY…ELESLSRGRR (61 aa)) is removed in mature form. A glycan (N-linked (GlcNAc...) asparagine) is linked at N63. 3 disulfide bridges follow: C101/C145, C134/C182, and C138/C184. Residues 195–245 (RSPGSSQEQRARTPQTRVTIRTVRVRRPPKGKHQKFKHTHDKKALKETLGA) constitute a propeptide, removed in mature form. A compositionally biased stretch (basic residues) spans 220-235 (RRPPKGKHQKFKHTHD). The disordered stretch occupies residues 220–245 (RRPPKGKHQKFKHTHDKKALKETLGA). A compositionally biased stretch (basic and acidic residues) spans 236–245 (KKALKETLGA).

The protein belongs to the PDGF/VEGF growth factor family. Antiparallel homodimer; disulfide-linked. Antiparallel heterodimer with PDGFA; disulfide-linked. The PDGFB homodimer interacts with PDGFRA and PDGFRB homodimers, and with heterodimers formed by PDGFRA and PDGFRB. The heterodimer composed of PDGFA and PDGFB interacts with PDGFRB homodimers, and with heterodimers formed by PDGFRA and PDGFRB. Interacts with XLKD1. Interacts with LRP1. Interacts with SORL1 (via the N-terminal ectodomain). Interacts with CD82; this interaction inhibits PDGFB-mediated signaling pathway.

It is found in the secreted. Growth factor that plays an essential role in the regulation of embryonic development, cell proliferation, cell migration, survival and chemotaxis. Potent mitogen for cells of mesenchymal origin. Required for normal proliferation and recruitment of pericytes and vascular smooth muscle cells in the central nervous system, skin, lung, heart and placenta. Required for normal blood vessel development, and for normal development of kidney glomeruli. Plays an important role in wound healing. Signaling is modulated by the formation of heterodimers with PDGFA. The polypeptide is Platelet-derived growth factor subunit B (PDGFB) (Felis catus (Cat)).